Here is a 337-residue protein sequence, read N- to C-terminus: Beta-hexosaminidase (337 aa).

Substrate contacts are provided by residues Asp62, Arg70, Arg133, and 163–164 (KH). His176 (proton donor/acceptor) is an active-site residue. Asp248 acts as the Nucleophile in catalysis.

This sequence belongs to the glycosyl hydrolase 3 family. NagZ subfamily.

The protein resides in the cytoplasm. It catalyses the reaction Hydrolysis of terminal non-reducing N-acetyl-D-hexosamine residues in N-acetyl-beta-D-hexosaminides.. It functions in the pathway cell wall biogenesis; peptidoglycan recycling. In terms of biological role, plays a role in peptidoglycan recycling by cleaving the terminal beta-1,4-linked N-acetylglucosamine (GlcNAc) from peptide-linked peptidoglycan fragments, giving rise to free GlcNAc, anhydro-N-acetylmuramic acid and anhydro-N-acetylmuramic acid-linked peptides. This Psychromonas ingrahamii (strain DSM 17664 / CCUG 51855 / 37) protein is Beta-hexosaminidase.